Reading from the N-terminus, the 106-residue chain is Glutaredoxin-1 (106 aa).

Position 2 is an N-acetylalanine (A2). The 104-residue stretch at Q3–Q106 folds into the Glutaredoxin domain. K9 carries the post-translational modification N6-succinyllysine. 2 cysteine pairs are disulfide-bonded: C23–C26 and C79–C83.

The protein belongs to the glutaredoxin family.

The protein resides in the cytoplasm. Its function is as follows. Has a glutathione-disulfide oxidoreductase activity in the presence of NADPH and glutathione reductase. Reduces low molecular weight disulfides and proteins. The sequence is that of Glutaredoxin-1 (GLRX) from Bos taurus (Bovine).